The following is a 343-amino-acid chain: Aspartate carbamoyltransferase catalytic subunit (343 aa).

The span at 1–14 shows a compositional bias: polar residues; that stretch reads MTTDTTGRTGNPAA. The disordered stretch occupies residues 1–20; the sequence is MTTDTTGRTGNPAATASPDR. 2 residues coordinate carbamoyl phosphate: Arg-91 and Thr-92. Lys-119 is an L-aspartate binding site. Residues Arg-141, His-171, and Gln-174 each coordinate carbamoyl phosphate. Residues Arg-204 and Arg-259 each coordinate L-aspartate. Residues Gly-300 and Pro-301 each coordinate carbamoyl phosphate.

This sequence belongs to the aspartate/ornithine carbamoyltransferase superfamily. ATCase family. In terms of assembly, heterododecamer (2C3:3R2) of six catalytic PyrB chains organized as two trimers (C3), and six regulatory PyrI chains organized as three dimers (R2).

The enzyme catalyses carbamoyl phosphate + L-aspartate = N-carbamoyl-L-aspartate + phosphate + H(+). It participates in pyrimidine metabolism; UMP biosynthesis via de novo pathway; (S)-dihydroorotate from bicarbonate: step 2/3. In terms of biological role, catalyzes the condensation of carbamoyl phosphate and aspartate to form carbamoyl aspartate and inorganic phosphate, the committed step in the de novo pyrimidine nucleotide biosynthesis pathway. The sequence is that of Aspartate carbamoyltransferase catalytic subunit from Burkholderia lata (strain ATCC 17760 / DSM 23089 / LMG 22485 / NCIMB 9086 / R18194 / 383).